A 347-amino-acid polypeptide reads, in one-letter code: NADH-quinone oxidoreductase subunit H (347 aa).

The next 8 membrane-spanning stretches (helical) occupy residues 14-34 (IMIG…AYIL), 82-102 (AVFL…WAVI), 115-135 (VGIL…IMGG), 161-181 (IGFV…TDIV), 198-218 (LLDW…ISAL), 258-278 (AIVL…LPPL), 285-305 (WVPG…MFGI), and 321-341 (LGWK…AFVL).

This sequence belongs to the complex I subunit 1 family. As to quaternary structure, NDH-1 is composed of 14 different subunits. Subunits NuoA, H, J, K, L, M, N constitute the membrane sector of the complex.

The protein resides in the cell inner membrane. It catalyses the reaction a quinone + NADH + 5 H(+)(in) = a quinol + NAD(+) + 4 H(+)(out). Functionally, NDH-1 shuttles electrons from NADH, via FMN and iron-sulfur (Fe-S) centers, to quinones in the respiratory chain. The immediate electron acceptor for the enzyme in this species is believed to be ubiquinone. Couples the redox reaction to proton translocation (for every two electrons transferred, four hydrogen ions are translocated across the cytoplasmic membrane), and thus conserves the redox energy in a proton gradient. This subunit may bind ubiquinone. This chain is NADH-quinone oxidoreductase subunit H, found in Allorhizobium ampelinum (strain ATCC BAA-846 / DSM 112012 / S4) (Agrobacterium vitis (strain S4)).